The sequence spans 914 residues: UPF0182 protein Syncc9605_1323 (914 aa).

The next 9 helical transmembrane spans lie at 4–24, 37–57, 81–101, 123–143, 152–172, 195–215, 240–260, 285–305, and 312–332; these read LLLL…WLWF, WLLQ…ARAW, IALL…LDLL, RIGS…MTWL, IVAA…SLAL, FAGL…TLVF, MRLI…LVWL, LPLR…LLLP, and QFLA…TPLT.

Belongs to the UPF0182 family.

The protein localises to the cell membrane. This chain is UPF0182 protein Syncc9605_1323, found in Synechococcus sp. (strain CC9605).